The sequence spans 349 residues: MITKNIDENLISVIPEDSDDLLNLRRIIKENDKIIGDTTRVLKQDKDYSRPDKGERIKVRIALTVEKISLDDVLDRLRIRGTISESSNESVPHGTHHSFILKINDGITISKKKWLPFEKNLLESSNNQVGFVLVAIDTGDSGIARLRGTHLEFMPNIYSGSGGKRYKTNFNIEKFFEQVQQAISTILKEGDSIVIFGPGETKKRFANFIQKSQNLQKFKVQVVEGIDSGGEDGIYTFTKSNTMKEIMSDSKLAKVSSIIDEVMLLANKKSTKFTMGFDETFNANQMGAVESMVFSDKAIQDDEQKMIDFLNDMENKGVKMYSVDSSTDIGLRVTGLGGIVSLLRYSIES.

It belongs to the eukaryotic release factor 1 family. Pelota subfamily. In terms of assembly, monomer. A divalent metal cation serves as cofactor.

The protein localises to the cytoplasm. Functionally, may function in recognizing stalled ribosomes, interact with stem-loop structures in stalled mRNA molecules, and effect endonucleolytic cleavage of the mRNA. May play a role in the release non-functional ribosomes and degradation of damaged mRNAs. Has endoribonuclease activity. This is Protein pelota homolog from Nitrosopumilus maritimus (strain SCM1).